A 397-amino-acid polypeptide reads, in one-letter code: Argininosuccinate synthase (397 aa).

9-17 is a binding site for ATP; it reads AYSGGLDTS. Y85 contributes to the L-citrulline binding site. Position 115 (G115) interacts with ATP. T117, N121, and D122 together coordinate L-aspartate. Residue N121 coordinates L-citrulline. L-citrulline is bound by residues R125, S173, E258, and Y270.

It belongs to the argininosuccinate synthase family. Type 1 subfamily. In terms of assembly, homotetramer.

The protein localises to the cytoplasm. The catalysed reaction is L-citrulline + L-aspartate + ATP = 2-(N(omega)-L-arginino)succinate + AMP + diphosphate + H(+). It functions in the pathway amino-acid biosynthesis; L-arginine biosynthesis; L-arginine from L-ornithine and carbamoyl phosphate: step 2/3. In Streptococcus suis (strain 05ZYH33), this protein is Argininosuccinate synthase.